A 96-amino-acid polypeptide reads, in one-letter code: Co-chaperonin GroES (96 aa).

Belongs to the GroES chaperonin family. Heptamer of 7 subunits arranged in a ring. Interacts with the chaperonin GroEL.

Its subcellular location is the cytoplasm. Together with the chaperonin GroEL, plays an essential role in assisting protein folding. The GroEL-GroES system forms a nano-cage that allows encapsulation of the non-native substrate proteins and provides a physical environment optimized to promote and accelerate protein folding. GroES binds to the apical surface of the GroEL ring, thereby capping the opening of the GroEL channel. The polypeptide is Co-chaperonin GroES (Nitrosomonas eutropha (strain DSM 101675 / C91 / Nm57)).